Consider the following 346-residue polypeptide: Holliday junction branch migration complex subunit RuvB (346 aa).

A large ATPase domain (RuvB-L) region spans residues serine 4–tyrosine 185. ATP-binding positions include leucine 24, arginine 25, glycine 66, lysine 69, threonine 70, threonine 71, glutamate 132 to tyrosine 134, arginine 175, tyrosine 185, and arginine 222. Threonine 70 contacts Mg(2+). Positions threonine 186–aspartate 256 are small ATPAse domain (RuvB-S). The tract at residues alanine 259–aspartate 346 is head domain (RuvB-H). Residues arginine 295, arginine 314, and arginine 319 each coordinate DNA.

The protein belongs to the RuvB family. Homohexamer. Forms an RuvA(8)-RuvB(12)-Holliday junction (HJ) complex. HJ DNA is sandwiched between 2 RuvA tetramers; dsDNA enters through RuvA and exits via RuvB. An RuvB hexamer assembles on each DNA strand where it exits the tetramer. Each RuvB hexamer is contacted by two RuvA subunits (via domain III) on 2 adjacent RuvB subunits; this complex drives branch migration. In the full resolvosome a probable DNA-RuvA(4)-RuvB(12)-RuvC(2) complex forms which resolves the HJ.

The protein resides in the cytoplasm. The enzyme catalyses ATP + H2O = ADP + phosphate + H(+). In terms of biological role, the RuvA-RuvB-RuvC complex processes Holliday junction (HJ) DNA during genetic recombination and DNA repair, while the RuvA-RuvB complex plays an important role in the rescue of blocked DNA replication forks via replication fork reversal (RFR). RuvA specifically binds to HJ cruciform DNA, conferring on it an open structure. The RuvB hexamer acts as an ATP-dependent pump, pulling dsDNA into and through the RuvAB complex. RuvB forms 2 homohexamers on either side of HJ DNA bound by 1 or 2 RuvA tetramers; 4 subunits per hexamer contact DNA at a time. Coordinated motions by a converter formed by DNA-disengaged RuvB subunits stimulates ATP hydrolysis and nucleotide exchange. Immobilization of the converter enables RuvB to convert the ATP-contained energy into a lever motion, pulling 2 nucleotides of DNA out of the RuvA tetramer per ATP hydrolyzed, thus driving DNA branch migration. The RuvB motors rotate together with the DNA substrate, which together with the progressing nucleotide cycle form the mechanistic basis for DNA recombination by continuous HJ branch migration. Branch migration allows RuvC to scan DNA until it finds its consensus sequence, where it cleaves and resolves cruciform DNA. The polypeptide is Holliday junction branch migration complex subunit RuvB (Nitrosomonas europaea (strain ATCC 19718 / CIP 103999 / KCTC 2705 / NBRC 14298)).